A 102-amino-acid chain; its full sequence is NADH-quinone oxidoreductase subunit K (102 aa).

Helical transmembrane passes span 5–25, 31–51, and 62–82; these read LGHF…GIFL, IVLL…FVAF, and VFVF…LAIL.

The protein belongs to the complex I subunit 4L family. NDH-1 is composed of 14 different subunits. Subunits NuoA, H, J, K, L, M, N constitute the membrane sector of the complex.

It is found in the cell inner membrane. It catalyses the reaction a quinone + NADH + 5 H(+)(in) = a quinol + NAD(+) + 4 H(+)(out). Its function is as follows. NDH-1 shuttles electrons from NADH, via FMN and iron-sulfur (Fe-S) centers, to quinones in the respiratory chain. The immediate electron acceptor for the enzyme in this species is believed to be ubiquinone. Couples the redox reaction to proton translocation (for every two electrons transferred, four hydrogen ions are translocated across the cytoplasmic membrane), and thus conserves the redox energy in a proton gradient. The polypeptide is NADH-quinone oxidoreductase subunit K (Paracidovorax citrulli (strain AAC00-1) (Acidovorax citrulli)).